The following is a 383-amino-acid chain: Pyruvate synthase subunit PorA (383 aa).

Heterotetramer of one alpha, one beta, one delta and one gamma chain.

The enzyme catalyses 2 oxidized [2Fe-2S]-[ferredoxin] + pyruvate + CoA = 2 reduced [2Fe-2S]-[ferredoxin] + acetyl-CoA + CO2 + H(+). The polypeptide is Pyruvate synthase subunit PorA (porA) (Methanothermobacter thermautotrophicus (strain ATCC 29096 / DSM 1053 / JCM 10044 / NBRC 100330 / Delta H) (Methanobacterium thermoautotrophicum)).